Here is a 176-residue protein sequence, read N- to C-terminus: B9 domain-containing protein 2 (176 aa).

Positions 2-118 (AEVHIIGQII…LSPTWRPLGT (117 aa)) constitute a C2 B9-type domain.

The protein belongs to the B9D family. In terms of assembly, part of the tectonic-like complex (also named B9 complex).

Its subcellular location is the cytoplasm. The protein resides in the cytoskeleton. The protein localises to the cilium basal body. It is found in the cilium axoneme. In terms of biological role, component of the tectonic-like complex, a complex localized at the transition zone of primary cilia and acting as a barrier that prevents diffusion of transmembrane proteins between the cilia and plasma membranes. This is B9 domain-containing protein 2 (b9d2) from Xenopus laevis (African clawed frog).